We begin with the raw amino-acid sequence, 402 residues long: 2-pyrone synthase (402 aa).

The acetoacetyl-CoA site is built by Lys-60, Arg-63, Cys-169, Leu-272, Arg-274, Gly-310, Arg-312, and Ala-313. Cys-169 is a catalytic residue.

Belongs to the thiolase-like superfamily. Chalcone/stilbene synthases family. In terms of tissue distribution, expressed in both vegetative and reproductive organs. The expression is strong in the leaf, scape (the inflorescence stem) and corolla (both in the ligule and the unpigmented tube), moderate in the bract and carpel, detectable in the root and pappus but not detectable in the stamen.

The catalysed reaction is 2 malonyl-CoA + acetyl-CoA + 2 H(+) = triacetate lactone + 2 CO2 + 3 CoA. Polyketide synthase, which uses acetyl-CoA and two condensation reactions with malonyl-CoA to form triacetic acid lactone (also called methylpyrone), a precursor of phytoalexin. May participate in insect and pathogen resistance. The sequence is that of 2-pyrone synthase from Gerbera hybrida (Daisy).